The sequence spans 515 residues: Folate synthesis bifunctional protein, mitochondrial (515 aa).

A mitochondrion-targeting transit peptide spans 1–28 (MSILKCLGVRGNQLCAARNYLKVLGFSS). The HPPK stretch occupies residues 47–172 (VIALGSNVGD…PFVMAPLMDL (126 aa)). One can recognise a Pterin-binding domain in the interval 230–498 (TLVMGILNLT…NVKDNLDAVK (269 aa)). The segment at 232 to 515 (VMGILNLTPD…QKSSPIKFKQ (284 aa)) is DHPS. N237 is a Mg(2+) binding site. Residues T277, D314, N333, D406, K451, and 486–488 (RVH) each bind (7,8-dihydropterin-6-yl)methyl diphosphate.

This sequence in the N-terminal section; belongs to the HPPK family. It in the C-terminal section; belongs to the DHPS family. As to quaternary structure, homomultimer. It depends on Mg(2+) as a cofactor.

It localises to the mitochondrion. The catalysed reaction is 6-hydroxymethyl-7,8-dihydropterin + ATP = (7,8-dihydropterin-6-yl)methyl diphosphate + AMP + H(+). The enzyme catalyses (7,8-dihydropterin-6-yl)methyl diphosphate + 4-aminobenzoate = 7,8-dihydropteroate + diphosphate. The protein operates within cofactor biosynthesis; tetrahydrofolate biosynthesis; 2-amino-4-hydroxy-6-hydroxymethyl-7,8-dihydropteridine diphosphate from 7,8-dihydroneopterin triphosphate: step 4/4. It participates in cofactor biosynthesis; tetrahydrofolate biosynthesis; 7,8-dihydrofolate from 2-amino-4-hydroxy-6-hydroxymethyl-7,8-dihydropteridine diphosphate and 4-aminobenzoate: step 1/2. Functionally, catalyzes the first two consecutive steps of tetrahydrofolate biosynthesis. The protein is Folate synthesis bifunctional protein, mitochondrial of Pisum sativum (Garden pea).